The following is a 164-amino-acid chain: uncharacterized protein (164 aa).

This is an uncharacterized protein from Methanocaldococcus jannaschii (strain ATCC 43067 / DSM 2661 / JAL-1 / JCM 10045 / NBRC 100440) (Methanococcus jannaschii).